A 315-amino-acid polypeptide reads, in one-letter code: ATP synthase gamma chain (315 aa).

It belongs to the ATPase gamma chain family. As to quaternary structure, F-type ATPases have 2 components, CF(1) - the catalytic core - and CF(0) - the membrane proton channel. CF(1) has five subunits: alpha(3), beta(3), gamma(1), delta(1), epsilon(1). CF(0) has three main subunits: a, b and c.

The protein resides in the cell membrane. Produces ATP from ADP in the presence of a proton gradient across the membrane. The gamma chain is believed to be important in regulating ATPase activity and the flow of protons through the CF(0) complex. This is ATP synthase gamma chain from Latilactobacillus sakei subsp. sakei (strain 23K) (Lactobacillus sakei subsp. sakei).